The chain runs to 199 residues: Gamma-glutamylcyclotransferase 2-3 (199 aa).

5 to 10 (VFGYGS) contributes to the substrate binding site. The active-site Proton acceptor is the Glu-86.

The protein belongs to the gamma-glutamylcyclotransferase family. Requires Mn(2+) as cofactor.

The protein localises to the cytoplasm. The catalysed reaction is glutathione = L-cysteinylglycine + 5-oxo-L-proline. Converts GSH to 5-oxoproline and cysteine-glycine (Cys-Gly) dipeptide in vitro and plays a significant role in glutathione (GSH) homeostasis. Has no activity towards gamma-glutamyl-L-cysteine but possesses very low activity towards gamma-glutamyl-L-alanine. The sequence is that of Gamma-glutamylcyclotransferase 2-3 from Arabidopsis thaliana (Mouse-ear cress).